We begin with the raw amino-acid sequence, 241 residues long: Uridylate kinase (241 aa).

Residue 15 to 18 (KLSG) participates in ATP binding. The tract at residues 23-28 (GTEGFG) is involved in allosteric activation by GTP. UMP is bound at residue Gly57. Gly58 and Arg62 together coordinate ATP. UMP contacts are provided by residues Asp77 and 138–145 (TGNPFFTT). Positions 165, 171, and 174 each coordinate ATP.

This sequence belongs to the UMP kinase family. As to quaternary structure, homohexamer.

Its subcellular location is the cytoplasm. It carries out the reaction UMP + ATP = UDP + ADP. Its pathway is pyrimidine metabolism; CTP biosynthesis via de novo pathway; UDP from UMP (UMPK route): step 1/1. Its activity is regulated as follows. Allosterically activated by GTP. Inhibited by UTP. Catalyzes the reversible phosphorylation of UMP to UDP. This chain is Uridylate kinase, found in Escherichia coli O139:H28 (strain E24377A / ETEC).